The following is a 212-amino-acid chain: Riboflavin kinase (212 aa).

Residues 1-87 are H-T-H motif-like; sequence MKMKTLFLLI…YEEISTALYS (87 aa). The riboflavin kinase stretch occupies residues 88 to 212; the sequence is GFIVGEVISG…DGDKVRIEVV (125 aa). Residue 97–102 participates in CDP binding; sequence GIGEGA. Residues Thr124 and Asn126 each contribute to the Mg(2+) site. The FMN site is built by Thr180 and Glu188. 193–196 provides a ligand contact to CDP; that stretch reads VKLR.

The protein belongs to the archaeal riboflavin kinase family. Mg(2+) is required as a cofactor.

It carries out the reaction riboflavin + CTP = CDP + FMN + H(+). It functions in the pathway cofactor biosynthesis; FMN biosynthesis; FMN from riboflavin (CTP route): step 1/1. In terms of biological role, catalyzes the CTP-dependent phosphorylation of riboflavin (vitamin B2) to form flavin mononucleotide (FMN). This Pyrococcus abyssi (strain GE5 / Orsay) protein is Riboflavin kinase (ribK).